We begin with the raw amino-acid sequence, 171 residues long: MDYFTLFGLPASYTLSLEQLAVRYQDLQRQYHPDKFASAPAAEQLAAVQHSATINQAWQTLRHPLTRAEYLLSLHGFDLASEQHTVRDTAFLMEQLELREELDEIGQAKDEARLEAFIKRVKALFDTRHQLMVEQLQNETWDAAADTVRKLRFLDKLRSSAEELEEKLLDF.

The region spanning 2–74 (DYFTLFGLPA…LTRAEYLLSL (73 aa)) is the J domain.

Belongs to the HscB family. Interacts with HscA and stimulates its ATPase activity. Interacts with IscU.

Co-chaperone involved in the maturation of iron-sulfur cluster-containing proteins. Seems to help targeting proteins to be folded toward HscA. The protein is Co-chaperone protein HscB of Klebsiella pneumoniae (strain 342).